The primary structure comprises 874 residues: Valine--tRNA ligase (874 aa).

Positions 1-10 (MTENSQQQPP) are enriched in polar residues. The tract at residues 1 to 23 (MTENSQQQPPASEPELPTQYAPA) is disordered. Residues 57-67 (PNVTGSLHLGH) carry the 'HIGH' region motif. A 'KMSKS' region motif is present at residues 531 to 535 (KMSKS). Lysine 534 contacts ATP. Residues 806–871 (IDIVAERKRL…ARIQAQLDRM (66 aa)) adopt a coiled-coil conformation.

This sequence belongs to the class-I aminoacyl-tRNA synthetase family. ValS type 1 subfamily. As to quaternary structure, monomer.

It localises to the cytoplasm. It carries out the reaction tRNA(Val) + L-valine + ATP = L-valyl-tRNA(Val) + AMP + diphosphate. In terms of biological role, catalyzes the attachment of valine to tRNA(Val). As ValRS can inadvertently accommodate and process structurally similar amino acids such as threonine, to avoid such errors, it has a 'posttransfer' editing activity that hydrolyzes mischarged Thr-tRNA(Val) in a tRNA-dependent manner. The protein is Valine--tRNA ligase of Streptomyces avermitilis (strain ATCC 31267 / DSM 46492 / JCM 5070 / NBRC 14893 / NCIMB 12804 / NRRL 8165 / MA-4680).